A 317-amino-acid polypeptide reads, in one-letter code: Acetyl-coenzyme A carboxylase carboxyl transferase subunit alpha (317 aa).

The CoA carboxyltransferase C-terminal domain occupies 40 to 294 (RLQHKSQELT…KQQILADLAE (255 aa)).

The protein belongs to the AccA family. As to quaternary structure, acetyl-CoA carboxylase is a heterohexamer composed of biotin carboxyl carrier protein (AccB), biotin carboxylase (AccC) and two subunits each of ACCase subunit alpha (AccA) and ACCase subunit beta (AccD).

It localises to the cytoplasm. It catalyses the reaction N(6)-carboxybiotinyl-L-lysyl-[protein] + acetyl-CoA = N(6)-biotinyl-L-lysyl-[protein] + malonyl-CoA. The protein operates within lipid metabolism; malonyl-CoA biosynthesis; malonyl-CoA from acetyl-CoA: step 1/1. Its function is as follows. Component of the acetyl coenzyme A carboxylase (ACC) complex. First, biotin carboxylase catalyzes the carboxylation of biotin on its carrier protein (BCCP) and then the CO(2) group is transferred by the carboxyltransferase to acetyl-CoA to form malonyl-CoA. The protein is Acetyl-coenzyme A carboxylase carboxyl transferase subunit alpha of Haemophilus ducreyi (strain 35000HP / ATCC 700724).